Reading from the N-terminus, the 470-residue chain is UDP-N-acetylmuramoylalanine--D-glutamate ligase (470 aa).

Residue 120–126 (GSNGKTT) coordinates ATP.

It belongs to the MurCDEF family.

It is found in the cytoplasm. It carries out the reaction UDP-N-acetyl-alpha-D-muramoyl-L-alanine + D-glutamate + ATP = UDP-N-acetyl-alpha-D-muramoyl-L-alanyl-D-glutamate + ADP + phosphate + H(+). It functions in the pathway cell wall biogenesis; peptidoglycan biosynthesis. Functionally, cell wall formation. Catalyzes the addition of glutamate to the nucleotide precursor UDP-N-acetylmuramoyl-L-alanine (UMA). The polypeptide is UDP-N-acetylmuramoylalanine--D-glutamate ligase (Nitrosomonas eutropha (strain DSM 101675 / C91 / Nm57)).